The chain runs to 171 residues: Protein phosphatase 1 regulatory subunit 1A (171 aa).

Methionine 1 carries the post-translational modification N-acetylmethionine. Residues 1–171 (MEPDNSPRKI…PLDSQGASLV (171 aa)) form a disordered region. An essential for activity region spans residues 9–12 (KIQF). Over residues 19 to 29 (PHLDPEAAEQI) the composition is skewed to basic and acidic residues. Threonine 35 bears the Phosphothreonine mark. The interval 42–54 (TSDQSSPEIDEDR) is essential for activity. Residues serine 43, serine 46, serine 47, and serine 67 each carry the phosphoserine modification. A compositionally biased stretch (polar residues) spans 122-146 (GSASRPDTPGTAQKSAESNPKTQEQ). An interaction with PPP1R15A region spans residues 143 to 171 (TQEQCGVEPRTEDSSAHMLPLDSQGASLV).

This sequence belongs to the protein phosphatase inhibitor 1 family. In terms of assembly, interacts with PPP1R15A. In terms of processing, phosphorylation of Thr-35 is required for activity.

Functionally, inhibitor of protein-phosphatase 1. This protein may be important in hormonal control of glycogen metabolism. Hormones that elevate intracellular cAMP increase I-1 activity in many tissues. I-1 activation may impose cAMP control over proteins that are not directly phosphorylated by PKA. Following a rise in intracellular calcium, I-1 is inactivated by calcineurin (or PP2B). Does not inhibit type-2 phosphatases. The sequence is that of Protein phosphatase 1 regulatory subunit 1A (Ppp1r1a) from Mus musculus (Mouse).